The chain runs to 317 residues: Beta-ketoacyl-[acyl-carrier-protein] synthase III (317 aa).

Residues Cys112 and His244 contribute to the active site. Residues 245 to 249 (QANVR) are ACP-binding. Asn274 is a catalytic residue.

Belongs to the thiolase-like superfamily. FabH family. As to quaternary structure, homodimer.

It is found in the cytoplasm. The catalysed reaction is malonyl-[ACP] + acetyl-CoA + H(+) = 3-oxobutanoyl-[ACP] + CO2 + CoA. Its pathway is lipid metabolism; fatty acid biosynthesis. Functionally, catalyzes the condensation reaction of fatty acid synthesis by the addition to an acyl acceptor of two carbons from malonyl-ACP. Catalyzes the first condensation reaction which initiates fatty acid synthesis and may therefore play a role in governing the total rate of fatty acid production. Possesses both acetoacetyl-ACP synthase and acetyl transacylase activities. Its substrate specificity determines the biosynthesis of branched-chain and/or straight-chain of fatty acids. This is Beta-ketoacyl-[acyl-carrier-protein] synthase III from Rickettsia bellii (strain OSU 85-389).